The sequence spans 347 residues: Methylthioribose-1-phosphate isomerase (347 aa).

Residues 46–48 (RGA), R89, and Q196 each bind substrate. D237 acts as the Proton donor in catalysis. 247-248 (NK) contacts substrate.

Belongs to the eIF-2B alpha/beta/delta subunits family. MtnA subfamily.

It carries out the reaction 5-(methylsulfanyl)-alpha-D-ribose 1-phosphate = 5-(methylsulfanyl)-D-ribulose 1-phosphate. It functions in the pathway amino-acid biosynthesis; L-methionine biosynthesis via salvage pathway; L-methionine from S-methyl-5-thio-alpha-D-ribose 1-phosphate: step 1/6. Its function is as follows. Catalyzes the interconversion of methylthioribose-1-phosphate (MTR-1-P) into methylthioribulose-1-phosphate (MTRu-1-P). This chain is Methylthioribose-1-phosphate isomerase, found in Chloroflexus aurantiacus (strain ATCC 29366 / DSM 635 / J-10-fl).